Consider the following 503-residue polypeptide: Hemogen (503 aa).

2 stretches are compositionally biased toward basic residues: residues 1–10 and 61–79; these read MDMGKGRPRL and KKRK…RKRQ. The disordered stretch occupies residues 1 to 129; the sequence is MDMGKGRPRL…PLVPSPTKAV (129 aa). The interval 7–87 is necessary for nuclear localization; it reads RPRLKLPQMP…RQGNVEQKAE (81 aa). Phosphoserine is present on residues Ser-90, Ser-103, Ser-124, Ser-153, Ser-158, Ser-171, Ser-213, Ser-223, Ser-228, Ser-241, and Ser-269. The residue at position 286 (Thr-286) is a Phosphothreonine. The disordered stretch occupies residues 381–503; the sequence is QKTIQESPEP…ENGIYSSALF (123 aa). Low complexity predominate over residues 385–396; that stretch reads QESPEPEQYSPE. 2 positions are modified to phosphoserine: Ser-387 and Ser-394. The segment covering 426 to 436 has biased composition (basic and acidic residues); sequence CQDREEPKHSL.

As to expression, expressed in hematopoietic precursor cells. Highly expressed in bone marrow, the red pulp of the spleen and round spermatids. Weakly expressed in peripheral blood cells.

The protein resides in the nucleus. Functionally, regulates the proliferation and differentiation of hematopoietic cells. Overexpression block the TPA-induced megakaryocytic differentiation in the K562 cell model. May also prevent cell apoptosis through the activation of the nuclear factor-kappa B (NF-kB). This Mus musculus (Mouse) protein is Hemogen (Hemgn).